Here is a 441-residue protein sequence, read N- to C-terminus: tRNA (adenine(37)-N6)-methyltransferase (441 aa).

A TsaA-like domain is found at 30 to 168 (TEPVGYLESC…YIAEYDSPQN (139 aa)). S-adenosyl-L-methionine-binding positions include 47-49 (PRQ), 90-91 (HK), R117, L127, and 148-151 (IHGT). A compositionally biased stretch (polar residues) spans 179–192 (QNNQHTPNTVSQSD). Disordered stretches follow at residues 179 to 231 (QNNQ…EENY) and 264 to 284 (SSVA…SEKG).

It belongs to the tRNA methyltransferase O family.

The catalysed reaction is N(6)-L-threonylcarbamoyladenosine(37) in tRNA + S-adenosyl-L-methionine = N(6)-methyl,N(6)-L-threonylcarbamoyladenosine(37) in tRNA + S-adenosyl-L-homocysteine + H(+). Functionally, S-adenosyl-L-methionine-dependent methyltransferase responsible for the addition of the methyl group in the formation of N6-methyl-N6-threonylcarbamoyladenosine at position 37 (m(6)t(6)A37) of the tRNA anticodon loop of tRNA(Ser)(GCU). The methyl group of m(6)t(6)A37 may improve the efficiency of the tRNA decoding ability. The polypeptide is tRNA (adenine(37)-N6)-methyltransferase (Homo sapiens (Human)).